A 259-amino-acid polypeptide reads, in one-letter code: Global transcriptional regulator CodY (259 aa).

Residues 1 to 155 (MSLLSRMRKI…GATVVGMEIL (155 aa)) are GAF domain. Residues 203–222 (ASKIADRVGITRSVIVNALR) constitute a DNA-binding region (H-T-H motif). Residue Ser215 is modified to Phosphoserine.

Belongs to the CodY family.

Its subcellular location is the cytoplasm. Its function is as follows. DNA-binding global transcriptional regulator which is involved in the adaptive response to starvation and acts by directly or indirectly controlling the expression of numerous genes in response to nutrient availability. During rapid exponential growth, CodY is highly active and represses genes whose products allow adaptation to nutrient depletion. The polypeptide is Global transcriptional regulator CodY (Halalkalibacterium halodurans (strain ATCC BAA-125 / DSM 18197 / FERM 7344 / JCM 9153 / C-125) (Bacillus halodurans)).